The chain runs to 287 residues: RNA polymerase sigma factor RpoH (287 aa).

The tract at residues 54–123 (LILSHLRFVI…IHEYVLRNWR (70 aa)) is sigma-70 factor domain-2. The Interaction with polymerase core subunit RpoC motif lies at 78–81 (DLIQ). Residues 230–283 (ALSSLDERSRNIIHARWLDDSDHKMTLREIAHNYGISAERVRQLEKNAMKKLKV) form a sigma-70 factor domain-4 region. The segment at residues 256 to 275 (LREIAHNYGISAERVRQLEK) is a DNA-binding region (H-T-H motif).

This sequence belongs to the sigma-70 factor family. RpoH subfamily. As to quaternary structure, interacts with the RNA polymerase core enzyme.

The protein localises to the cytoplasm. In terms of biological role, sigma factors are initiation factors that promote the attachment of RNA polymerase to specific initiation sites and are then released. This sigma factor is involved in regulation of expression of heat shock genes. The sequence is that of RNA polymerase sigma factor RpoH from Buchnera aphidicola subsp. Baizongia pistaciae (strain Bp).